The chain runs to 1336 residues: Vascular endothelial growth factor receptor 1 (1336 aa).

Positions 1–22 are cleaved as a signal peptide; the sequence is MVSCWDTAVLPCALLGCLLLTG. Residues 23–758 lie on the Extracellular side of the membrane; that stretch reads YCSGSKLKGP…QGTSDKSNLE (736 aa). Ig-like C2-type domains lie at 32-121, 151-214, 230-327, 335-421, 429-549, 556-655, and 661-747; these read PELS…KKME, GREL…VNGH, LDVQ…TSVH, SVKH…LTAT, QIYE…RDIR, PNGF…EVLV, and PLLL…AYLT. Disulfide bonds link Cys-53–Cys-107 and Cys-158–Cys-207. Residues Asn-100, Asn-164, Asn-196, and Asn-251 are each glycosylated (N-linked (GlcNAc...) asparagine). Cys-252 and Cys-311 are oxidised to a cystine. N-linked (GlcNAc...) asparagine glycans are attached at residues Asn-323, Asn-417, Asn-474, Asn-516, Asn-597, Asn-625, Asn-666, and Asn-713. 2 disulfides stabilise this stretch: Cys-454–Cys-535 and Cys-577–Cys-636. A disulfide bridge links Cys-682 with Cys-731. Residues 759-780 traverse the membrane as a helical segment; it reads LITLTCTCVAATLFWLLLTLFI. Residues 781–1336 are Cytoplasmic-facing; the sequence is RKLKRSSSEV…SVVLYSSPPA (556 aa). A Protein kinase domain is found at 827-1158; sequence LKLGKSLGRG…ELVEKLGDLL (332 aa). Residues 833–841 and Lys-861 contribute to the ATP site; that span reads LGRGAFGKV. Position 914 is a phosphotyrosine; by autocatalysis (Tyr-914). A compositionally biased stretch (basic and acidic residues) spans 941-957; the sequence is KKEKLEPDLEQDQKPRL. The interval 941-982 is disordered; sequence KKEKLEPDLEQDQKPRLDSVSSSESFTSSGFQEDKSVSDVEG. The segment covering 959 to 969 has biased composition (low complexity); it reads SVSSSESFTSS. The active-site Proton acceptor is Asp-1022. 6 positions are modified to phosphotyrosine; by autocatalysis: Tyr-1053, Tyr-1169, Tyr-1213, Tyr-1242, Tyr-1325, and Tyr-1331. The tract at residues 1304-1326 is disordered; that stretch reads RQEDEDDPELGKESCCSPPPDYN.

This sequence belongs to the protein kinase superfamily. Tyr protein kinase family. CSF-1/PDGF receptor subfamily. In terms of assembly, interacts with VEGFA, VEGFB and PGF. Monomer in the absence of bound VEGFA, VEGFB or PGF. Homodimer in the presence of bound VEGFA, VEGFB and PGF. Can also form a heterodimer with KDR. Interacts (tyrosine phosphorylated) with CBL, CRK, GRB2, NCK1, PIK3R1, PLCG, PSEN1 and PTPN11. Probably interacts with PTPRB. Interacts with RACK1. Identified in a complex with CBL and CD2AP. In terms of processing, N-glycosylated. Ubiquitinated after VEGFA-mediated autophosphorylation, leading to proteolytic degradation. Post-translationally, autophosphorylated on tyrosine residues upon ligand binding. Autophosphorylation occurs in trans, i.e. one subunit of the dimeric receptor phosphorylates tyrosine residues on the other subunit. Phosphorylation at Tyr-1169 is important for interaction with PLCG. Phosphorylation at Tyr-1213 is important for interaction with PIK3R1, PTPN11, GRB2, and PLCG. Phosphorylation at Tyr-1331 is important for endocytosis and for interaction with CBL, NCK1 and CRK. Is probably dephosphorylated by PTPRB.

The protein resides in the cell membrane. It localises to the endosome. The enzyme catalyses L-tyrosyl-[protein] + ATP = O-phospho-L-tyrosyl-[protein] + ADP + H(+). Present in an inactive conformation in the absence of bound ligand. Binding of VEGFA, VEGFB or PGF leads to dimerization and activation by autophosphorylation on tyrosine residues. Functionally, tyrosine-protein kinase that acts as a cell-surface receptor for VEGFA, VEGFB and PGF, and plays an essential role in the development of embryonic vasculature, the regulation of angiogenesis, cell survival, cell migration, macrophage function, chemotaxis, and cancer cell invasion. Acts as a positive regulator of postnatal retinal hyaloid vessel regression. May play an essential role as a negative regulator of embryonic angiogenesis by inhibiting excessive proliferation of endothelial cells. Can promote endothelial cell proliferation, survival and angiogenesis in adulthood. Its function in promoting cell proliferation seems to be cell-type specific. Promotes PGF-mediated proliferation of endothelial cells, and proliferation of some types of cancer cells, but does not promote proliferation of normal fibroblasts. Has very high affinity for VEGFA and relatively low protein kinase activity; may function as a negative regulator of VEGFA signaling by limiting the amount of free VEGFA and preventing its binding to KDR. Modulates KDR signaling by forming heterodimers with KDR. Ligand binding leads to the activation of several signaling cascades. Activation of PLCG leads to the production of the cellular signaling molecules diacylglycerol and inositol 1,4,5-trisphosphate and the activation of protein kinase C. Mediates phosphorylation of PIK3R1, the regulatory subunit of phosphatidylinositol 3-kinase, leading to the activation of phosphatidylinositol kinase and the downstream signaling pathway. Mediates activation of MAPK1/ERK2, MAPK3/ERK1 and the MAP kinase signaling pathway, as well as of the AKT1 signaling pathway. Phosphorylates SRC, YES1 and PLCG, and may also phosphorylate CBL. Promotes phosphorylation of AKT1 and PTK2/FAK1. In Rattus norvegicus (Rat), this protein is Vascular endothelial growth factor receptor 1 (Flt1).